A 54-amino-acid chain; its full sequence is Large ribosomal subunit protein bL33A (54 aa).

It belongs to the bacterial ribosomal protein bL33 family.

The protein is Large ribosomal subunit protein bL33A of Mycobacteroides abscessus (strain ATCC 19977 / DSM 44196 / CCUG 20993 / CIP 104536 / JCM 13569 / NCTC 13031 / TMC 1543 / L948) (Mycobacterium abscessus).